Reading from the N-terminus, the 176-residue chain is Large ribosomal subunit protein uL10 (176 aa).

Belongs to the universal ribosomal protein uL10 family. As to quaternary structure, part of the ribosomal stalk of the 50S ribosomal subunit. The N-terminus interacts with L11 and the large rRNA to form the base of the stalk. The C-terminus forms an elongated spine to which L12 dimers bind in a sequential fashion forming a multimeric L10(L12)X complex.

Forms part of the ribosomal stalk, playing a central role in the interaction of the ribosome with GTP-bound translation factors. The sequence is that of Large ribosomal subunit protein uL10 from Alcanivorax borkumensis (strain ATCC 700651 / DSM 11573 / NCIMB 13689 / SK2).